Reading from the N-terminus, the 242-residue chain is EF-hand domain-containing protein D2 (242 aa).

The disordered stretch occupies residues 1-53; the sequence is MATDELASKLSRRLQMEGEGGGEAPEQPGLNGAAAAAAAAGAPDETAEALGSA. At Ala-2 the chain carries N-acetylalanine. The residue at position 11 (Ser-11) is a Phosphoserine. A compositionally biased stretch (low complexity) spans 32–42; the sequence is GAAAAAAAAGA. Residues Ser-76 and Ser-78 each carry the phosphoserine modification. Phosphotyrosine is present on Tyr-85. 2 consecutive EF-hand domains span residues 94 to 129 and 130 to 165; these read KQIK…LGAP and QTHL…AAAG. 8 residues coordinate Ca(2+): Asp-107, Asp-111, Glu-118, Asp-143, Asp-145, Asp-147, Lys-149, and Glu-154. Lys-235 carries the N6-acetyllysine modification.

As to quaternary structure, interacts with CASP9; with inactive form.

The protein localises to the membrane raft. Its function is as follows. May regulate B-cell receptor (BCR)-induced immature and primary B-cell apoptosis. Plays a role as negative regulator of the canonical NF-kappa-B-activating branch. Controls spontaneous apoptosis through the regulation of BCL2L1 abundance. The protein is EF-hand domain-containing protein D2 (EFHD2) of Bos taurus (Bovine).